A 230-amino-acid chain; its full sequence is LexA repressor (230 aa).

A DNA-binding region (H-T-H motif) is located at residues Ile-28 to Lys-48. Residues Ser-148 and Lys-185 each act as for autocatalytic cleavage activity in the active site.

It belongs to the peptidase S24 family. Homodimer.

The enzyme catalyses Hydrolysis of Ala-|-Gly bond in repressor LexA.. Functionally, represses a number of genes involved in the response to DNA damage (SOS response), including recA and lexA. In the presence of single-stranded DNA, RecA interacts with LexA causing an autocatalytic cleavage which disrupts the DNA-binding part of LexA, leading to derepression of the SOS regulon and eventually DNA repair. This Anaeromyxobacter sp. (strain K) protein is LexA repressor.